A 376-amino-acid polypeptide reads, in one-letter code: Cinnamyl alcohol dehydrogenase 2 (376 aa).

Position 44 (C44) interacts with Zn(2+). S46 serves as a coordination point for NADP(+). Positions 66, 67, 97, 100, 103, 111, and 161 each coordinate Zn(2+). NADP(+) contacts are provided by residues T165, 187–192, 210–215, T250, G274, and 297–299; these read GLGGLG, SRSSEK, and SQI.

The protein belongs to the zinc-containing alcohol dehydrogenase family. In terms of assembly, homodimer. Requires Zn(2+) as cofactor. Expressed at the base of the stems.

It catalyses the reaction (E)-cinnamyl alcohol + NADP(+) = (E)-cinnamaldehyde + NADPH + H(+). The catalysed reaction is (E)-coniferol + NADP(+) = (E)-coniferaldehyde + NADPH + H(+). The enzyme catalyses (E)-sinapyl alcohol + NADP(+) = (E)-sinapaldehyde + NADPH + H(+). It carries out the reaction (E)-4-coumaroyl alcohol + NADP(+) = (E)-4-coumaraldehyde + NADPH + H(+). It catalyses the reaction (E)-caffeyl alcohol + NADP(+) = (E)-caffeyl aldehyde + NADPH + H(+). Its pathway is aromatic compound metabolism; phenylpropanoid biosynthesis. Involved in lignin biosynthesis. Catalyzes the final step specific for the production of lignin monomers. Catalyzes the NADPH-dependent reduction of coniferaldehyde, 5-hydroxyconiferaldehyde, sinapaldehyde, 4-coumaraldehyde and caffeyl aldehyde to their respective alcohols. The polypeptide is Cinnamyl alcohol dehydrogenase 2 (Arabidopsis thaliana (Mouse-ear cress)).